The primary structure comprises 41 residues: Large ribosomal subunit protein bL36 (41 aa).

It belongs to the bacterial ribosomal protein bL36 family.

This chain is Large ribosomal subunit protein bL36, found in Vibrio vulnificus (strain YJ016).